We begin with the raw amino-acid sequence, 517 residues long: L-amino-acid oxidase (517 aa).

The first 19 residues, 1–19 (MNVFSIFSLVFLAAFGSCA), serve as a signal peptide directing secretion. Cys-29 and Cys-192 are disulfide-bonded. Residues 62-63 (MA), 82-83 (EA), Arg-90, and 106-109 (GPMR) contribute to the FAD site. Arg-109 is a substrate binding site. Residue Asn-191 is glycosylated (N-linked (GlcNAc...) asparagine). Position 280 (Val-280) interacts with FAD. Cysteines 350 and 431 form a disulfide. Residue Asn-380 is glycosylated (N-linked (GlcNAc...) asparagine). Residue Tyr-391 participates in substrate binding. FAD-binding positions include Glu-476 and 483–488 (GWLDST). 483-484 (GW) contacts substrate.

It belongs to the flavin monoamine oxidase family. FIG1 subfamily. Monomer. This is in contrast with most of its orthologs, that are non-covalently linked homodimers. The cofactor is FAD. In terms of processing, N-glycosylated. Expressed by the venom gland.

The protein resides in the secreted. It carries out the reaction an L-alpha-amino acid + O2 + H2O = a 2-oxocarboxylate + H2O2 + NH4(+). It catalyses the reaction L-leucine + O2 + H2O = 4-methyl-2-oxopentanoate + H2O2 + NH4(+). The catalysed reaction is L-phenylalanine + O2 + H2O = 3-phenylpyruvate + H2O2 + NH4(+). The enzyme catalyses L-tryptophan + O2 + H2O = indole-3-pyruvate + H2O2 + NH4(+). It carries out the reaction L-methionine + O2 + H2O = 4-methylsulfanyl-2-oxobutanoate + H2O2 + NH4(+). It catalyses the reaction L-isoleucine + O2 + H2O = (S)-3-methyl-2-oxopentanoate + H2O2 + NH4(+). The catalysed reaction is L-arginine + O2 + H2O = 5-guanidino-2-oxopentanoate + H2O2 + NH4(+). The enzyme catalyses L-aspartate + O2 + H2O = oxaloacetate + H2O2 + NH4(+). It carries out the reaction L-histidine + O2 + H2O = 3-(imidazol-5-yl)pyruvate + H2O2 + NH4(+). It catalyses the reaction L-asparagine + O2 + H2O = 2-oxosuccinamate + H2O2 + NH4(+). The catalysed reaction is L-tyrosine + O2 + H2O = 3-(4-hydroxyphenyl)pyruvate + H2O2 + NH4(+). The enzyme catalyses L-glutamine + O2 + H2O = 2-oxoglutaramate + H2O2 + NH4(+). It carries out the reaction L-alanine + O2 + H2O = pyruvate + H2O2 + NH4(+). It catalyses the reaction L-lysine + O2 + H2O = 6-amino-2-oxohexanoate + H2O2 + NH4(+). The catalysed reaction is L-glutamate + O2 + H2O = H2O2 + 2-oxoglutarate + NH4(+). In terms of biological role, catalyzes an oxidative deamination of predominantly hydrophobic and aromatic L-amino acids, thus producing hydrogen peroxide that may contribute to the diverse toxic effects of this enzyme. Is highly active against L-Tyr, L-Asp, L-Phe, L-Glu, L-Trp, L-His, L-Gln, L-Ile, L-Met, L-Leu and moderately active against L-Lys, L-Arg, L-Ala and L-Asn. Exhibits diverse biological activities, such as edema, inflammatory cell infiltration, cytotoxicity and apoptosis, as well as induction of platelet aggregation. Effects of snake L-amino oxidases on platelets are controversial, since they either induce aggregation or inhibit agonist-induced aggregation. These different effects are probably due to different experimental conditions. This protein may also induce hemorrhage, hemolysis, and have antibacterial and antiparasitic activities. The chain is L-amino-acid oxidase from Bungarus fasciatus (Banded krait).